Consider the following 216-residue polypeptide: ATP-dependent Clp protease proteolytic subunit (216 aa).

Residue serine 120 is the Nucleophile of the active site. The active site involves histidine 145.

This sequence belongs to the peptidase S14 family. Fourteen ClpP subunits assemble into 2 heptameric rings which stack back to back to give a disk-like structure with a central cavity, resembling the structure of eukaryotic proteasomes.

It localises to the cytoplasm. It carries out the reaction Hydrolysis of proteins to small peptides in the presence of ATP and magnesium. alpha-casein is the usual test substrate. In the absence of ATP, only oligopeptides shorter than five residues are hydrolyzed (such as succinyl-Leu-Tyr-|-NHMec, and Leu-Tyr-Leu-|-Tyr-Trp, in which cleavage of the -Tyr-|-Leu- and -Tyr-|-Trp bonds also occurs).. Functionally, cleaves peptides in various proteins in a process that requires ATP hydrolysis. Has a chymotrypsin-like activity. Plays a major role in the degradation of misfolded proteins. The chain is ATP-dependent Clp protease proteolytic subunit from Cupriavidus necator (strain ATCC 17699 / DSM 428 / KCTC 22496 / NCIMB 10442 / H16 / Stanier 337) (Ralstonia eutropha).